Consider the following 100-residue polypeptide: Large ribosomal subunit protein uL23 (100 aa).

This sequence belongs to the universal ribosomal protein uL23 family. Part of the 50S ribosomal subunit. Contacts protein L29, and trigger factor when it is bound to the ribosome.

Functionally, one of the early assembly proteins it binds 23S rRNA. One of the proteins that surrounds the polypeptide exit tunnel on the outside of the ribosome. Forms the main docking site for trigger factor binding to the ribosome. This is Large ribosomal subunit protein uL23 from Thermotoga sp. (strain RQ2).